The sequence spans 176 residues: ATP-dependent protease subunit HslV (176 aa).

The active site involves threonine 2. The Na(+) site is built by glycine 157, cysteine 160, and threonine 163.

Belongs to the peptidase T1B family. HslV subfamily. In terms of assembly, a double ring-shaped homohexamer of HslV is capped on each side by a ring-shaped HslU homohexamer. The assembly of the HslU/HslV complex is dependent on binding of ATP.

The protein resides in the cytoplasm. It carries out the reaction ATP-dependent cleavage of peptide bonds with broad specificity.. With respect to regulation, allosterically activated by HslU binding. Functionally, protease subunit of a proteasome-like degradation complex believed to be a general protein degrading machinery. The polypeptide is ATP-dependent protease subunit HslV (Pseudomonas savastanoi pv. phaseolicola (strain 1448A / Race 6) (Pseudomonas syringae pv. phaseolicola (strain 1448A / Race 6))).